Reading from the N-terminus, the 126-residue chain is Large ribosomal subunit protein eL32 (126 aa).

Belongs to the eukaryotic ribosomal protein eL32 family. Part of the 50S ribosomal subunit.

The protein is Large ribosomal subunit protein eL32 (rpl32e) of Thermococcus kodakarensis (strain ATCC BAA-918 / JCM 12380 / KOD1) (Pyrococcus kodakaraensis (strain KOD1)).